The sequence spans 876 residues: Neurotrypsin (876 aa).

The first 20 residues, 1–20 (MTLARFVLALMLGALPEVVG), serve as a signal peptide directing secretion. A glycan (N-linked (GlcNAc...) asparagine) is linked at Asn-26. Residues 29-89 (LHHSHRHSPP…ALQAGHTPRP (61 aa)) are disordered. A compositionally biased stretch (low complexity) spans 43–54 (YPSYYLPTQQRP). Residues 57–72 (TRPPPPLPRFPRPPRA) show a composition bias toward pro residues. The Kringle domain occupies 94-166 (CPAGEPWVSV…GKVDWGYCDC (73 aa)). 20 disulfide bridges follow: Cys-94/Cys-166, Cys-110/Cys-150, Cys-139/Cys-164, Cys-196/Cys-260, Cys-209/Cys-270, Cys-240/Cys-250, Cys-306/Cys-370, Cys-319/Cys-380, Cys-350/Cys-360, Cys-413/Cys-476, Cys-426/Cys-486, Cys-456/Cys-466, Cys-526/Cys-590, Cys-539/Cys-600, Cys-570/Cys-580, Cys-620/Cys-751, Cys-662/Cys-678, Cys-766/Cys-832, Cys-795/Cys-809, and Cys-822/Cys-851. SRCR domains lie at 171-272 (VRLR…TCSF), 281-382 (IRLA…SCTP), 388-488 (IRLA…ACYP), and 501-602 (VRLM…ICDY). The zymogen activation region stretch occupies residues 620-631 (CGLRLLHRRQKR). Residues 632–875 (IIGGKNSLRG…FVPWIKSVTK (244 aa)) enclose the Peptidase S1 domain. The active-site Charge relay system is the His-677. N-linked (GlcNAc...) asparagine glycosylation occurs at Asn-684. Asp-727 serves as the catalytic Charge relay system. Residue Ser-826 is the Charge relay system of the active site.

Belongs to the peptidase S1 family.

The protein resides in the secreted. Its function is as follows. Plays a role in neuronal plasticity and the proteolytic action may subserve structural reorganizations associated with learning and memory operations. In Gorilla gorilla gorilla (Western lowland gorilla), this protein is Neurotrypsin (PRSS12).